An 80-amino-acid polypeptide reads, in one-letter code: Raniseptin-4 (80 aa).

The first 22 residues, 1–22 (MAFLKKSLFLVLFLGIVSLSIC), serve as a signal peptide directing secretion. The propeptide occupies 23-49 (EEEKREGEEEEKQEEENEELSEEELRD).

This sequence belongs to the frog skin active peptide (FSAP) family. Dermaseptin subfamily. Expressed by the skin glands.

The protein resides in the secreted. Has antibacterial activity. This Boana raniceps (Chaco tree frog) protein is Raniseptin-4.